A 201-amino-acid chain; its full sequence is Small ribosomal subunit protein uS4 (201 aa).

Positions 21 to 43 (GTGKELNRRPYAPGDHGQGRRQK) are disordered. The 61-residue stretch at 93 to 153 (RRLDNMVYRL…EKSKDMAIIK (61 aa)) folds into the S4 RNA-binding domain.

Belongs to the universal ribosomal protein uS4 family. Part of the 30S ribosomal subunit. Contacts protein S5. The interaction surface between S4 and S5 is involved in control of translational fidelity.

Its function is as follows. One of the primary rRNA binding proteins, it binds directly to 16S rRNA where it nucleates assembly of the body of the 30S subunit. In terms of biological role, with S5 and S12 plays an important role in translational accuracy. The sequence is that of Small ribosomal subunit protein uS4 from Levilactobacillus brevis (strain ATCC 367 / BCRC 12310 / CIP 105137 / JCM 1170 / LMG 11437 / NCIMB 947 / NCTC 947) (Lactobacillus brevis).